Here is a 320-residue protein sequence, read N- to C-terminus: ATP-dependent 6-phosphofructokinase (320 aa).

Gly-12 provides a ligand contact to ATP. 22 to 26 (RGVVR) is an ADP binding site. ATP is bound by residues 73-74 (RF) and 103-106 (GDGS). Position 104 (Asp-104) interacts with Mg(2+). Substrate is bound at residue 126 to 128 (TID). Catalysis depends on Asp-128, which acts as the Proton acceptor. Arg-155 contacts ADP. Residues Arg-163 and 170–172 (MGR) each bind substrate. ADP contacts are provided by residues 186–188 (GCE), Lys-212, and 214–216 (KKH). Substrate is bound by residues Glu-223, Arg-244, and 250–253 (HIQR).

It belongs to the phosphofructokinase type A (PFKA) family. ATP-dependent PFK group I subfamily. Prokaryotic clade 'B1' sub-subfamily. In terms of assembly, homotetramer. The cofactor is Mg(2+).

It is found in the cytoplasm. It catalyses the reaction beta-D-fructose 6-phosphate + ATP = beta-D-fructose 1,6-bisphosphate + ADP + H(+). Its pathway is carbohydrate degradation; glycolysis; D-glyceraldehyde 3-phosphate and glycerone phosphate from D-glucose: step 3/4. Its activity is regulated as follows. Allosterically activated by ADP and other diphosphonucleosides, and allosterically inhibited by phosphoenolpyruvate. Its function is as follows. Catalyzes the phosphorylation of D-fructose 6-phosphate to fructose 1,6-bisphosphate by ATP, the first committing step of glycolysis. The polypeptide is ATP-dependent 6-phosphofructokinase (Edwardsiella ictaluri (strain 93-146)).